The following is a 500-amino-acid chain: Glycerol kinase (500 aa).

T12 provides a ligand contact to ADP. Residues T12, T13, and S14 each contribute to the ATP site. Residue T12 coordinates sn-glycerol 3-phosphate. ADP is bound at residue R16. Sn-glycerol 3-phosphate contacts are provided by R82, E83, Y134, and D244. 5 residues coordinate glycerol: R82, E83, Y134, D244, and Q245. ADP-binding residues include T266 and G309. ATP is bound by residues T266, G309, Q313, and G410. The ADP site is built by G410 and N414.

It belongs to the FGGY kinase family. Homotetramer and homodimer (in equilibrium).

The catalysed reaction is glycerol + ATP = sn-glycerol 3-phosphate + ADP + H(+). It functions in the pathway polyol metabolism; glycerol degradation via glycerol kinase pathway; sn-glycerol 3-phosphate from glycerol: step 1/1. Activated by phosphorylation and inhibited by fructose 1,6-bisphosphate (FBP). Key enzyme in the regulation of glycerol uptake and metabolism. Catalyzes the phosphorylation of glycerol to yield sn-glycerol 3-phosphate. The polypeptide is Glycerol kinase (Alkaliphilus metalliredigens (strain QYMF)).